A 364-amino-acid chain; its full sequence is MKINGTPFRSIWCEAGEVRIIDQRWLPHELRIVPLRTRAEFAAAIRDMWVRGAPLIGATAAWGMAVQMAEDPSDASLAETWQVLHETRPTAINLRWALNEMRRLLAPLPPSERAAAAARRAAEICDEDVEINRRIGAHGLTLIREIAERKRGRVNILTHCNAGWLATVDWGTATSPIYHALEAGIDVHVFVDETRPRNQGALLTAWEMNSHGVSHDLIVDNAGGHLMQHGEVDLVIVGTDRTTAQGDVCNKIGTYLKALAAKANGVPFYVALPSPTIDWTVRDGVAEIPIEERSSAEVTHVQGKAPDGSVISVQISPDGTGARNPAFDVTPASLVTGLITERGICAAEAGAMEALFPEAARSAA.

Substrate-binding positions include 51-53 (RGA), arginine 88, and glutamine 199. The active-site Proton donor is aspartate 240. Position 250-251 (250-251 (NK)) interacts with substrate.

This sequence belongs to the eIF-2B alpha/beta/delta subunits family. MtnA subfamily.

The enzyme catalyses 5-(methylsulfanyl)-alpha-D-ribose 1-phosphate = 5-(methylsulfanyl)-D-ribulose 1-phosphate. It functions in the pathway amino-acid biosynthesis; L-methionine biosynthesis via salvage pathway; L-methionine from S-methyl-5-thio-alpha-D-ribose 1-phosphate: step 1/6. Catalyzes the interconversion of methylthioribose-1-phosphate (MTR-1-P) into methylthioribulose-1-phosphate (MTRu-1-P). This chain is Methylthioribose-1-phosphate isomerase, found in Cereibacter sphaeroides (strain KD131 / KCTC 12085) (Rhodobacter sphaeroides).